Reading from the N-terminus, the 65-residue chain is Light-harvesting protein B800/830/1020 alpha-2 chain (65 aa).

The Cytoplasmic segment spans residues 1–13 (MWKLWKFVDFRMT). A helical membrane pass occupies residues 14–34 (AVGFHIFFALIAFAVHFACIS). A bacteriochlorophyll is bound at residue His-29. At 35 to 65 (SERFNWLEGAPAAEYYMDENPGIWKRTSYDG) the chain is on the periplasmic side.

It belongs to the antenna complex alpha subunit family. As to quaternary structure, the core complex is formed by different alpha and beta chains, binding bacteriochlorophyll molecules, and arranged most probably in tetrameric structures disposed around the reaction center. The non-pigmented gamma chains may constitute additional components.

It localises to the cell inner membrane. Antenna complexes are light-harvesting systems, which transfer the excitation energy to the reaction centers. The sequence is that of Light-harvesting protein B800/830/1020 alpha-2 chain from Halorhodospira halochloris (Ectothiorhodospira halochloris).